A 245-amino-acid chain; its full sequence is 1-(5-phosphoribosyl)-5-[(5-phosphoribosylamino)methylideneamino] imidazole-4-carboxamide isomerase (245 aa).

The Proton acceptor role is filled by D11. Catalysis depends on D132, which acts as the Proton donor.

It belongs to the HisA/HisF family.

It is found in the cytoplasm. The enzyme catalyses 1-(5-phospho-beta-D-ribosyl)-5-[(5-phospho-beta-D-ribosylamino)methylideneamino]imidazole-4-carboxamide = 5-[(5-phospho-1-deoxy-D-ribulos-1-ylimino)methylamino]-1-(5-phospho-beta-D-ribosyl)imidazole-4-carboxamide. It functions in the pathway amino-acid biosynthesis; L-histidine biosynthesis; L-histidine from 5-phospho-alpha-D-ribose 1-diphosphate: step 4/9. In Bacillus velezensis (strain DSM 23117 / BGSC 10A6 / LMG 26770 / FZB42) (Bacillus amyloliquefaciens subsp. plantarum), this protein is 1-(5-phosphoribosyl)-5-[(5-phosphoribosylamino)methylideneamino] imidazole-4-carboxamide isomerase.